A 246-amino-acid polypeptide reads, in one-letter code: tRNA (guanine-N(1)-)-methyltransferase (246 aa).

S-adenosyl-L-methionine contacts are provided by residues Gly117 and 137–142 (IGDYVL).

Belongs to the RNA methyltransferase TrmD family. As to quaternary structure, homodimer.

It is found in the cytoplasm. The enzyme catalyses guanosine(37) in tRNA + S-adenosyl-L-methionine = N(1)-methylguanosine(37) in tRNA + S-adenosyl-L-homocysteine + H(+). Its function is as follows. Specifically methylates guanosine-37 in various tRNAs. This chain is tRNA (guanine-N(1)-)-methyltransferase, found in Acinetobacter baumannii (strain AB307-0294).